The chain runs to 37 residues: Large ribosomal subunit protein bL36 (37 aa).

This sequence belongs to the bacterial ribosomal protein bL36 family.

The polypeptide is Large ribosomal subunit protein bL36 (Magnetococcus marinus (strain ATCC BAA-1437 / JCM 17883 / MC-1)).